The primary structure comprises 343 residues: Heat-inducible transcription repressor HrcA (343 aa).

The protein belongs to the HrcA family.

Its function is as follows. Negative regulator of class I heat shock genes (grpE-dnaK-dnaJ and groELS operons). Prevents heat-shock induction of these operons. In Caldanaerobacter subterraneus subsp. tengcongensis (strain DSM 15242 / JCM 11007 / NBRC 100824 / MB4) (Thermoanaerobacter tengcongensis), this protein is Heat-inducible transcription repressor HrcA.